A 287-amino-acid polypeptide reads, in one-letter code: MAIIVDERTKVVVQGITGYQGKFHTERMLNYGTKIVAGVTPGKGGTEVLGVPVYDSVKEAVREADANASVIFVPAPFAADAVMEAADAGIKVIVCITEGIPVHDELKMYWRVKEAGATLIGPNCPGIISPGKTHLGIMPVQIFKPGNVGIVSRSGTLTYQIAYNLTKLGLGQSTVVGIGGDRIIGTDFVEVLRLFEDDKETKAVVLVGEIGGRDEEVAAEFIREMSKPVVGYVAGLTAPPGKRMGHAGAIIEGGVGTAESKIKALEAAGARVGKTPMEVAELVAEIL.

Residues 17–20 (TGYQ), Lys43, and 96–98 (ITE) contribute to the CoA site. Tyr159 provides a ligand contact to substrate. The active-site Tele-phosphohistidine intermediate is the His246.

This sequence belongs to the succinate/malate CoA ligase alpha subunit family. In terms of assembly, heterotetramer of two alpha and two beta subunits.

It carries out the reaction succinate + ATP + CoA = succinyl-CoA + ADP + phosphate. The catalysed reaction is GTP + succinate + CoA = succinyl-CoA + GDP + phosphate. The protein operates within carbohydrate metabolism; tricarboxylic acid cycle; succinate from succinyl-CoA (ligase route): step 1/1. Its function is as follows. Succinyl-CoA synthetase functions in the citric acid cycle (TCA), coupling the hydrolysis of succinyl-CoA to the synthesis of either ATP or GTP and thus represents the only step of substrate-level phosphorylation in the TCA. The alpha subunit of the enzyme binds the substrates coenzyme A and phosphate, while succinate binding and nucleotide specificity is provided by the beta subunit. The protein is Succinate--CoA ligase [ADP-forming] subunit alpha 2 of Archaeoglobus fulgidus (strain ATCC 49558 / DSM 4304 / JCM 9628 / NBRC 100126 / VC-16).